The sequence spans 716 residues: Inhibitor of nuclear factor kappa-B kinase subunit epsilon (716 aa).

The Protein kinase domain occupies 9–315 (WHTDDLLGQG…LQRVVVHVFS (307 aa)). Position 15–23 (15–23 (LGQGATASV)) interacts with ATP. Residue K30 forms a Glycyl lysine isopeptide (Lys-Gly) (interchain with G-Cter in ubiquitin) linkage. K38 contributes to the ATP binding site. D135 (proton acceptor) is an active-site residue. S172 bears the Phosphoserine; by autocatalysis and IKKB mark. Residue K231 forms a Glycyl lysine isopeptide (Lys-Gly) (interchain with G-Cter in SUMO1) linkage. The interval 383–647 (STAIPKGLAF…VQESLSKLLE (265 aa)) is interaction with DDX3X. K401 participates in a covalent cross-link: Glycyl lysine isopeptide (Lys-Gly) (interchain with G-Cter in ubiquitin). Residues 436 to 457 (QELMFRGLHWVMEVLQATCRRT) form a leucine-zipper region. Residue T501 is modified to Phosphothreonine. S664 is modified (phosphoserine).

The protein belongs to the protein kinase superfamily. Ser/Thr protein kinase family. I-kappa-B kinase subfamily. As to quaternary structure, homodimer. Interacts with MAVS/IPS1. Interacts (via protein kinase domain) with TTLL12 (via N-terminus); the interaction prevents MAVS binding to IKBKE. Interacts with the adapter proteins AZI2/NAP1, TANK and TBKBP1/SINTBAD. Interacts with SIKE1. Interacts with TICAM1/TRIF, IRF3 and RIGI; interactions are disrupted by the interaction between IKBKE and SIKE1. Interacts with TOPORS; induced by DNA damage. Interacts with CYLD. Interacts (when polyubiquitinated) with IKBKB, IKBKG and MYD88. Interacts with IFIH1. Interacts with DDX3X; the interaction may be induced upon virus infection. Interacts with TRIM6 (via SPRY box). Interacts with unanchored K48-linked polyubiquitin chains; this leads to IKBKE activation. Interacts with TBK1. Interacts with FKBP5. (Microbial infection) Interacts (via Protein kinase domain) with arenavirus protein N; the interaction inhibits IKBKE kinase function. In terms of assembly, (Microbial infection) Interacts with Ebola virus protein VP35; the interaction leads to inhibition of cellular antiviral response by blocking necessary interactions between the IKBKE and MAVS/IPS as well as its substrates IRF3 and IRF7. As to quaternary structure, (Microbial infection) Interacts with Severe fever with thrombocytopenia virus (SFTSV) NSs; this interaction this interaction sequesters IKBKE in NSs-induced cytoplasmic inclusion bodies thereby inhibiting the IFN responses. (Microbial infection) Interacts with human T-cell leukemia virus 1/HTLV-1 protein HBZ. In terms of assembly, (Microbial infection) Interacts with Epstein-Barr virus (EBV) protein NEC2/BFRF1; this interaction inhibits IKBKE kinase activity and IRF3 nuclear translocation. In terms of processing, autophosphorylated and phosphorylated by IKBKB/IKKB. Phosphorylation at Ser-172 is enhanced by the interaction with DDX3X. Phosphorylated at Thr-501 upon IFN activation. Post-translationally, sumoylation by TOPORS upon DNA damage is required for protection of cells against DNA damage-induced cell death. Desumoylated by SENP1. 'Lys-63'-linked polyubiquitinated at Lys-30 and Lys-401 by TRAF2:BIRC2 and TRAF2:BIRC3 complexes. Ubiquitination is induced by LPS, TNFA and interleukin-1 and required for full kinase activity and KF-kappa-B pathway activation. In terms of tissue distribution, highly expressed in spleen followed by thymus, peripheral blood leukocytes, pancreas, placenta. Weakly expressed in lung, kidney, prostate, ovary and colon.

Its subcellular location is the cytoplasm. It is found in the nucleus. The protein resides in the PML body. It carries out the reaction L-seryl-[I-kappa-B protein] + ATP = O-phospho-L-seryl-[I-kappa-B protein] + ADP + H(+). Functionally, serine/threonine kinase that plays an essential role in regulating inflammatory responses to viral infection, through the activation of the type I IFN, NF-kappa-B and STAT signaling. Also involved in TNFA and inflammatory cytokines, like Interleukin-1, signaling. Following activation of viral RNA sensors, such as RIG-I-like receptors, associates with DDX3X and phosphorylates interferon regulatory factors (IRFs), IRF3 and IRF7, as well as DDX3X. This activity allows subsequent homodimerization and nuclear translocation of the IRF3 leading to transcriptional activation of pro-inflammatory and antiviral genes including IFNB. In order to establish such an antiviral state, IKBKE forms several different complexes whose composition depends on the type of cell and cellular stimuli. Thus, several scaffolding molecules including IPS1/MAVS, TANK, AZI2/NAP1 or TBKBP1/SINTBAD can be recruited to the IKBKE-containing-complexes. Activated by polyubiquitination in response to TNFA and interleukin-1, regulates the NF-kappa-B signaling pathway through, at least, the phosphorylation of CYLD. Phosphorylates inhibitors of NF-kappa-B thus leading to the dissociation of the inhibitor/NF-kappa-B complex and ultimately the degradation of the inhibitor. In addition, is also required for the induction of a subset of ISGs which displays antiviral activity, may be through the phosphorylation of STAT1 at 'Ser-708'. Phosphorylation of STAT1 at 'Ser-708' also seems to promote the assembly and DNA binding of ISGF3 (STAT1:STAT2:IRF9) complexes compared to GAF (STAT1:STAT1) complexes, in this way regulating the balance between type I and type II IFN responses. Protects cells against DNA damage-induced cell death. Also plays an important role in energy balance regulation by sustaining a state of chronic, low-grade inflammation in obesity, wich leads to a negative impact on insulin sensitivity. Phosphorylates AKT1. The sequence is that of Inhibitor of nuclear factor kappa-B kinase subunit epsilon (IKBKE) from Homo sapiens (Human).